The primary structure comprises 122 residues: Large ribosomal subunit protein bL12 (122 aa).

This sequence belongs to the bacterial ribosomal protein bL12 family. As to quaternary structure, homodimer. Part of the ribosomal stalk of the 50S ribosomal subunit. Forms a multimeric L10(L12)X complex, where L10 forms an elongated spine to which 2 to 4 L12 dimers bind in a sequential fashion. Binds GTP-bound translation factors.

In terms of biological role, forms part of the ribosomal stalk which helps the ribosome interact with GTP-bound translation factors. Is thus essential for accurate translation. In Streptococcus sanguinis (strain SK36), this protein is Large ribosomal subunit protein bL12.